A 1074-amino-acid polypeptide reads, in one-letter code: Phospholipase D1 (1074 aa).

One can recognise a PX domain in the interval 81-212 (IKAQVLEVER…TEFLDVSQLS (132 aa)). Positions 219–328 (PKGLEGMIMK…WGGAIEEFIR (110 aa)) constitute a PH domain. 2 S-palmitoyl cysteine lipidation sites follow: cysteine 240 and cysteine 241. In terms of domain architecture, PLD phosphodiesterase 1 spans 459 to 486 (YLWAHHEKLVIIDQSVAFVGGIDLAYGR). The segment at 463 to 928 (HHEKLVIIDQ…MLGKRDSEMA (466 aa)) is catalytic. 3 positions are modified to phosphoserine: serine 499, serine 561, and serine 629. The 28-residue stretch at 891–918 (ELIYVHSKLLIADDNTVIIGSANINDRS) folds into the PLD phosphodiesterase 2 domain.

Belongs to the phospholipase D family. Interacts with PIP5K1B. In terms of tissue distribution, expressed in kidney, lung, and at a much lower levels, in brain, liver, heart, testis and spleen.

It localises to the cytoplasm. The protein resides in the perinuclear region. Its subcellular location is the endoplasmic reticulum membrane. It is found in the golgi apparatus membrane. The protein localises to the late endosome membrane. It catalyses the reaction a 1,2-diacyl-sn-glycero-3-phosphocholine + H2O = a 1,2-diacyl-sn-glycero-3-phosphate + choline + H(+). It carries out the reaction ethanol + a 1,2-diacyl-sn-glycero-3-phosphocholine = 1,2-diacyl-sn-glycero-3-phosphoethanol + choline. The enzyme catalyses 1,2-dihexadecanoyl-sn-glycero-3-phosphocholine + H2O = 1,2-dihexadecanoyl-sn-glycero-3-phosphate + choline + H(+). Its activity is regulated as follows. Stimulated by phosphatidylinositol 4,5-bisphosphate and phosphatidylinositol 3,4,5-trisphosphate, activated by the phosphokinase C-alpha, by the ADP-ribosylation factor-1 (ARF-1), and to a lesser extent by GTP-binding proteins: RHO A, RAC-1 and CDC42. Inhibited by oleate. In terms of biological role, function as phospholipase selectivefor phosphatidylcholine. Implicated as a critical step in numerous cellular pathways, including signal transduction, membrane trafficking, and the regulation of mitosis. May be involved in the regulation of perinuclear intravesicular membrane traffic. This chain is Phospholipase D1, found in Mus musculus (Mouse).